The sequence spans 159 residues: 2-C-methyl-D-erythritol 2,4-cyclodiphosphate synthase (159 aa).

A divalent metal cation-binding residues include D8 and H10. Residues 8–10 (DVH) and 34–35 (HS) each bind 4-CDP-2-C-methyl-D-erythritol 2-phosphate. H42 contributes to the a divalent metal cation binding site. 4-CDP-2-C-methyl-D-erythritol 2-phosphate-binding positions include 56-58 (DIG), 61-65 (FPDTD), 100-106 (AQAPKML), 132-135 (TTTE), F139, and R142.

Belongs to the IspF family. In terms of assembly, homotrimer. It depends on a divalent metal cation as a cofactor.

It carries out the reaction 4-CDP-2-C-methyl-D-erythritol 2-phosphate = 2-C-methyl-D-erythritol 2,4-cyclic diphosphate + CMP. The protein operates within isoprenoid biosynthesis; isopentenyl diphosphate biosynthesis via DXP pathway; isopentenyl diphosphate from 1-deoxy-D-xylulose 5-phosphate: step 4/6. Functionally, involved in the biosynthesis of isopentenyl diphosphate (IPP) and dimethylallyl diphosphate (DMAPP), two major building blocks of isoprenoid compounds. Catalyzes the conversion of 4-diphosphocytidyl-2-C-methyl-D-erythritol 2-phosphate (CDP-ME2P) to 2-C-methyl-D-erythritol 2,4-cyclodiphosphate (ME-CPP) with a corresponding release of cytidine 5-monophosphate (CMP). This is 2-C-methyl-D-erythritol 2,4-cyclodiphosphate synthase from Citrobacter koseri (strain ATCC BAA-895 / CDC 4225-83 / SGSC4696).